Here is a 124-residue protein sequence, read N- to C-terminus: Ragulator complex protein LAMTOR3 homolog (124 aa).

The protein belongs to the LAMTOR3 family. As to quaternary structure, part of the Ragulator complex composed of Lamtor3, Lamtor2, CG14184, CG14812, and Lamtor4.

Regulator of the TOR pathway, a signaling cascade that promotes cell growth in response to growth factors, energy levels, and amino acids. As part of the Ragulator complex, may activate the TOR signaling cascade in response to amino acids. This is Ragulator complex protein LAMTOR3 homolog from Drosophila melanogaster (Fruit fly).